A 92-amino-acid polypeptide reads, in one-letter code: Small integral membrane protein 12 (92 aa).

The helical transmembrane segment at 15-34 threads the bilayer; it reads YVTFPVAFVVGAVGYHLEWF.

This sequence belongs to the SMIM12 family.

Its subcellular location is the membrane. In Mus musculus (Mouse), this protein is Small integral membrane protein 12 (Smim12).